We begin with the raw amino-acid sequence, 677 residues long: DNA ligase (677 aa).

NAD(+) is bound by residues 32 to 36, 81 to 82, and glutamate 112; these read DAQYD and SL. Lysine 114 (N6-AMP-lysine intermediate) is an active-site residue. NAD(+) is bound by residues arginine 135, glutamate 171, lysine 288, and lysine 312. 4 residues coordinate Zn(2+): cysteine 416, cysteine 419, cysteine 434, and cysteine 439. In terms of domain architecture, BRCT spans 598-677; it reads NKNMPFSGME…REFINMLEQS (80 aa).

The protein belongs to the NAD-dependent DNA ligase family. LigA subfamily. It depends on Mg(2+) as a cofactor. Mn(2+) is required as a cofactor.

It catalyses the reaction NAD(+) + (deoxyribonucleotide)n-3'-hydroxyl + 5'-phospho-(deoxyribonucleotide)m = (deoxyribonucleotide)n+m + AMP + beta-nicotinamide D-nucleotide.. Its function is as follows. DNA ligase that catalyzes the formation of phosphodiester linkages between 5'-phosphoryl and 3'-hydroxyl groups in double-stranded DNA using NAD as a coenzyme and as the energy source for the reaction. It is essential for DNA replication and repair of damaged DNA. This is DNA ligase from Dehalococcoides mccartyi (strain CBDB1).